Reading from the N-terminus, the 502-residue chain is Glutamate--tRNA ligase (502 aa).

A 'HIGH' region motif is present at residues 12-22; sequence PSPTGYLHVGG. Residues 259–263 carry the 'KMSKS' region motif; sequence KLSKR. Position 262 (K262) interacts with ATP.

This sequence belongs to the class-I aminoacyl-tRNA synthetase family. Glutamate--tRNA ligase type 1 subfamily. In terms of assembly, monomer.

It localises to the cytoplasm. It catalyses the reaction tRNA(Glu) + L-glutamate + ATP = L-glutamyl-tRNA(Glu) + AMP + diphosphate. In terms of biological role, catalyzes the attachment of glutamate to tRNA(Glu) in a two-step reaction: glutamate is first activated by ATP to form Glu-AMP and then transferred to the acceptor end of tRNA(Glu). This chain is Glutamate--tRNA ligase, found in Chlorobium phaeobacteroides (strain DSM 266 / SMG 266 / 2430).